The following is a 510-amino-acid chain: NAD(P)H-quinone oxidoreductase subunit 2 B, chloroplastic (510 aa).

12 consecutive transmembrane segments (helical) span residues 24 to 44 (LLLFQGSSIFPECILIFGLIL), 59 to 79 (WFYFISSTSLVISITALLFRW), 99 to 119 (IFQFLILLCSTLCIPLSVEYI), 124 to 144 (MAITEFLLFVLTATLGGMFLC), 149 to 169 (LITIFVAPECFSLCSYLLSGY), 183 to 203 (YLLMGGASSSILVHGFSWLYG), 229 to 249 (ISIALISITVGLGFKLSPAPF), 295 to 315 (WHLLLEILAILSMILGNLLAI), 323 to 343 (MLAYSSIGQIGYVIIGIIVGD), 354 to 374 (YMLFYISMNLGTFACIVLFGL), 395 to 415 (ALSLALCLLSLGGLPPLAGFF), and 418 to 438 (LYLFWCGWQAGLYLLVSIGLL).

This sequence belongs to the complex I subunit 2 family. NDH is composed of at least 16 different subunits, 5 of which are encoded in the nucleus.

Its subcellular location is the plastid. The protein localises to the chloroplast thylakoid membrane. It carries out the reaction a plastoquinone + NADH + (n+1) H(+)(in) = a plastoquinol + NAD(+) + n H(+)(out). The catalysed reaction is a plastoquinone + NADPH + (n+1) H(+)(in) = a plastoquinol + NADP(+) + n H(+)(out). Functionally, NDH shuttles electrons from NAD(P)H:plastoquinone, via FMN and iron-sulfur (Fe-S) centers, to quinones in the photosynthetic chain and possibly in a chloroplast respiratory chain. The immediate electron acceptor for the enzyme in this species is believed to be plastoquinone. Couples the redox reaction to proton translocation, and thus conserves the redox energy in a proton gradient. This Agrostis stolonifera (Creeping bentgrass) protein is NAD(P)H-quinone oxidoreductase subunit 2 B, chloroplastic.